Here is a 557-residue protein sequence, read N- to C-terminus: ETHYLENE INSENSITIVE 3-like 5 protein (557 aa).

Disordered stretches follow at residues 1-23 (MVEV…DLEE) and 61-96 (NLNS…RKKM). Residues 64–82 (SVISSPSSSTSASSSSSSS) show a composition bias toward low complexity. Residues 270-311 (ERVRRLARQSKCLQDKMMAKETDTWSRVLNQEEARLNRLKIS) adopt a coiled-coil conformation.

This sequence belongs to the EIN3 family.

It localises to the nucleus. Functionally, putative transcription factor that may be involved in the ethylene response pathway. In Arabidopsis thaliana (Mouse-ear cress), this protein is ETHYLENE INSENSITIVE 3-like 5 protein (EIL5).